Reading from the N-terminus, the 233-residue chain is Putative cobalt transport protein CbiM (233 aa).

The next 6 helical transmembrane spans lie at 9–29 (PPMWCAVWWVLSGIVIAYGIV), 43–63 (PLVAISGAYMFILSSLKMPSV), 75–95 (LGAVLFGVPITAVLAAIVLLF), 107–127 (TLGANDFSMGIVGPAAAVIVY), 138–158 (TVGIFFAALFGDWLTYVTTAV), and 177–197 (IVIYAYTQVPLAIAEGILTVI).

Belongs to the CbiM family. As to quaternary structure, forms an energy-coupling factor (ECF) transporter complex composed of an ATP-binding protein (A component, CbiO), a transmembrane protein (T component, CbiQ) and 2 possible substrate-capture proteins (S components, CbiM and CbiN) of unknown stoichimetry.

It is found in the cell membrane. It participates in cofactor biosynthesis; adenosylcobalamin biosynthesis. Functionally, part of the energy-coupling factor (ECF) transporter complex CbiMNOQ involved in cobalt import. The chain is Putative cobalt transport protein CbiM from Methanocaldococcus jannaschii (strain ATCC 43067 / DSM 2661 / JAL-1 / JCM 10045 / NBRC 100440) (Methanococcus jannaschii).